Here is a 436-residue protein sequence, read N- to C-terminus: Protein GOLM2 (436 aa).

Position 1 is an N-acetylmethionine (M1). Over 1-14 (MVGFGANRRAGRLP) the chain is Cytoplasmic. A helical; Signal-anchor for type II membrane protein transmembrane segment spans residues 15–35 (SLVLVVLLVVIVVLAFNYWSI). A coiled-coil region spans residues 35–198 (ISSRHVLLQE…EEQKQETQKI (164 aa)). Over 36–436 (SSRHVLLQEE…YGKQHFNDVL (401 aa)) the chain is Lumenal. A compositionally biased stretch (basic and acidic residues) spans 225–247 (ADKNEEPSSNHIPHGKEQIKRGG). The disordered stretch occupies residues 225–436 (ADKNEEPSSN…YGKQHFNDVL (212 aa)). S233 and S275 each carry phosphoserine. A compositionally biased stretch (polar residues) spans 305 to 321 (NHNGNPGTSKQNPSSPL). S328 and S332 each carry phosphoserine. The segment covering 344 to 362 (ATKDRVSDFHKLKQSRFFD) has biased composition (basic and acidic residues). S366 is modified (phosphoserine). A compositionally biased stretch (acidic residues) spans 399 to 418 (YNEEEDGDGGEEDVQDDEER). A compositionally biased stretch (basic and acidic residues) spans 426-436 (DYGKQHFNDVL).

It belongs to the GOLM family.

Its subcellular location is the membrane. This chain is Protein GOLM2, found in Homo sapiens (Human).